The following is a 124-amino-acid chain: Glutaredoxin-2 (124 aa).

Cys13 and Cys16 are disulfide-bonded.

The protein belongs to the glutaredoxin family. In terms of assembly, homodimer.

The protein localises to the host cytoplasm. Glutaredoxin necessary for virion morphogenesis and virus replication. Functions as a thiol-disulfide transfer protein between membrane-associated OPG128 and substrates OPG095 or OPG053. The complete pathway for formation of disulfide bonds in intracellular virion membrane proteins sequentially involves oxidation of OPG072, OPG128 and OPG088. Exhibit thioltransferase and dehydroascorbate reductase activities in vitro. This is Glutaredoxin-2 (OPG088) from Bos taurus (Bovine).